The chain runs to 728 residues: Ribosome biogenesis protein bop1-A (728 aa).

The disordered stretch occupies residues 1–114; that stretch reads MKRGSQGEAG…ENDSSDEEDI (114 aa). The span at 55–67 shows a compositional bias: acidic residues; the sequence is SDDEEDHWSEEEE. Residues 68-77 show a composition bias toward basic and acidic residues; the sequence is NPGKSPKEII. WD repeat units follow at residues 393–432, 434–474, 514–556, 559–597, 600–639, 643–682, and 698–728; these read GHKDLVRCISVSPSGQWLVSGSDDCSVRFWEVSTGRCMKS, VLEG…RLLC, KHQK…SQNP, KNKGQVQKVLFHPTRPFFFVATQRYVRVYNLLKQELTKK, TNCKWVSSIAVHPAGDNLICGSYDSKLAWFDMDLSTKPYK, HHKKALRAVSFHKSYPLFASGSDDGSVIVCHGMVYNDLLQ, and HRDLGVLDVTFHPTQPWVFSSGADATIRLFT.

The protein belongs to the WD repeat BOP1/ERB1 family. Component of the PeBoW complex, composed of bop1, pes1 and wdr12. The complex is held together by bop1, which interacts with pes1 via its N-terminal domain and with wdr12 via a high-affinity interaction between the seven-bladed beta-propeller domains of the 2 proteins. The PeBoW complex associates with the 66S pre-ribosome.

The protein resides in the nucleus. Its subcellular location is the nucleolus. It is found in the nucleoplasm. Component of the PeBoW complex, which is required for maturation of 28S and 5.8S ribosomal RNAs and formation of the 60S ribosome. This is Ribosome biogenesis protein bop1-A (bop1-a) from Xenopus laevis (African clawed frog).